A 227-amino-acid chain; its full sequence is Phosphoglycolate phosphatase (227 aa).

The Nucleophile role is filled by D9. Positions 9, 11, and 171 each coordinate Mg(2+).

Belongs to the HAD-like hydrolase superfamily. CbbY/CbbZ/Gph/YieH family. Mg(2+) serves as cofactor.

It carries out the reaction 2-phosphoglycolate + H2O = glycolate + phosphate. The protein operates within organic acid metabolism; glycolate biosynthesis; glycolate from 2-phosphoglycolate: step 1/1. Functionally, specifically catalyzes the dephosphorylation of 2-phosphoglycolate. Is involved in the dissimilation of the intracellular 2-phosphoglycolate formed during the DNA repair of 3'-phosphoglycolate ends, a major class of DNA lesions induced by oxidative stress. The polypeptide is Phosphoglycolate phosphatase (Mesorhizobium japonicum (strain LMG 29417 / CECT 9101 / MAFF 303099) (Mesorhizobium loti (strain MAFF 303099))).